A 321-amino-acid polypeptide reads, in one-letter code: Fibronectin type III domain-containing protein 8 (321 aa).

The Fibronectin type-III domain maps to 175-277 (VPEVPFICEH…KPYKFATVST (103 aa)).

The chain is Fibronectin type III domain-containing protein 8 (Fndc8) from Mus musculus (Mouse).